The following is a 115-amino-acid chain: UPF0738 protein SERP0585 (115 aa).

This sequence belongs to the UPF0738 family.

The polypeptide is UPF0738 protein SERP0585 (Staphylococcus epidermidis (strain ATCC 35984 / DSM 28319 / BCRC 17069 / CCUG 31568 / BM 3577 / RP62A)).